The following is a 315-amino-acid chain: ATP synthase gamma chain (315 aa).

The protein belongs to the ATPase gamma chain family. F-type ATPases have 2 components, CF(1) - the catalytic core - and CF(0) - the membrane proton channel. CF(1) has five subunits: alpha(3), beta(3), gamma(1), delta(1), epsilon(1). CF(0) has three main subunits: a, b and c.

The protein localises to the cellular thylakoid membrane. In terms of biological role, produces ATP from ADP in the presence of a proton gradient across the membrane. The gamma chain is believed to be important in regulating ATPase activity and the flow of protons through the CF(0) complex. This is ATP synthase gamma chain from Nostoc sp. (strain PCC 7120 / SAG 25.82 / UTEX 2576).